The following is a 296-amino-acid chain: Acetylglutamate kinase (296 aa).

Residues 67 to 68, R89, and N194 contribute to the substrate site; that span reads GG.

This sequence belongs to the acetylglutamate kinase family. ArgB subfamily.

The protein localises to the cytoplasm. It carries out the reaction N-acetyl-L-glutamate + ATP = N-acetyl-L-glutamyl 5-phosphate + ADP. Its pathway is amino-acid biosynthesis; L-arginine biosynthesis; N(2)-acetyl-L-ornithine from L-glutamate: step 2/4. Functionally, catalyzes the ATP-dependent phosphorylation of N-acetyl-L-glutamate. The protein is Acetylglutamate kinase of Brucella canis (strain ATCC 23365 / NCTC 10854 / RM-666).